The primary structure comprises 72 residues: ATP synthase subunit c (72 aa).

2 helical membrane passes run 1 to 21 (MSLGVIAAAIAIGLSALGAGI) and 49 to 69 (FIGVALVEALPIIGVVIAFIV).

The protein belongs to the ATPase C chain family. As to quaternary structure, F-type ATPases have 2 components, F(1) - the catalytic core - and F(0) - the membrane proton channel. F(1) has five subunits: alpha(3), beta(3), gamma(1), delta(1), epsilon(1). F(0) has three main subunits: a(1), b(2) and c(10-14). The alpha and beta chains form an alternating ring which encloses part of the gamma chain. F(1) is attached to F(0) by a central stalk formed by the gamma and epsilon chains, while a peripheral stalk is formed by the delta and b chains.

Its subcellular location is the cell membrane. Its function is as follows. F(1)F(0) ATP synthase produces ATP from ADP in the presence of a proton or sodium gradient. F-type ATPases consist of two structural domains, F(1) containing the extramembraneous catalytic core and F(0) containing the membrane proton channel, linked together by a central stalk and a peripheral stalk. During catalysis, ATP synthesis in the catalytic domain of F(1) is coupled via a rotary mechanism of the central stalk subunits to proton translocation. In terms of biological role, key component of the F(0) channel; it plays a direct role in translocation across the membrane. A homomeric c-ring of between 10-14 subunits forms the central stalk rotor element with the F(1) delta and epsilon subunits. The sequence is that of ATP synthase subunit c from Bacillus anthracis (strain A0248).